The following is a 370-amino-acid chain: Chaperone protein DnaJ (370 aa).

Residues 7–73 (DYYEILGVPR…QKRAMYDRFG (67 aa)) form the J domain. The segment at 144 to 226 (GTEIPIEYER…CGGSGRVLRR (83 aa)) adopts a CR-type zinc-finger fold. Zn(2+)-binding residues include Cys-157, Cys-160, Cys-174, Cys-177, Cys-200, Cys-203, Cys-214, and Cys-217. CXXCXGXG motif repeat units lie at residues 157-164 (CPRCGGTG), 174-181 (CPRCGGTG), 200-207 (CDECGGTG), and 214-221 (CHECGGSG).

It belongs to the DnaJ family. As to quaternary structure, homodimer. The cofactor is Zn(2+).

Its subcellular location is the cytoplasm. Participates actively in the response to hyperosmotic and heat shock by preventing the aggregation of stress-denatured proteins and by disaggregating proteins, also in an autonomous, DnaK-independent fashion. Unfolded proteins bind initially to DnaJ; upon interaction with the DnaJ-bound protein, DnaK hydrolyzes its bound ATP, resulting in the formation of a stable complex. GrpE releases ADP from DnaK; ATP binding to DnaK triggers the release of the substrate protein, thus completing the reaction cycle. Several rounds of ATP-dependent interactions between DnaJ, DnaK and GrpE are required for fully efficient folding. Also involved, together with DnaK and GrpE, in the DNA replication of plasmids through activation of initiation proteins. The protein is Chaperone protein DnaJ of Thermotoga neapolitana (strain ATCC 49049 / DSM 4359 / NBRC 107923 / NS-E).